The chain runs to 92 residues: UPF0223 protein SERP0684 (92 aa).

Belongs to the UPF0223 family.

This chain is UPF0223 protein SERP0684, found in Staphylococcus epidermidis (strain ATCC 35984 / DSM 28319 / BCRC 17069 / CCUG 31568 / BM 3577 / RP62A).